The primary structure comprises 235 residues: 2-C-methyl-D-erythritol 4-phosphate cytidylyltransferase (235 aa).

Belongs to the IspD/TarI cytidylyltransferase family. IspD subfamily.

It catalyses the reaction 2-C-methyl-D-erythritol 4-phosphate + CTP + H(+) = 4-CDP-2-C-methyl-D-erythritol + diphosphate. Its pathway is isoprenoid biosynthesis; isopentenyl diphosphate biosynthesis via DXP pathway; isopentenyl diphosphate from 1-deoxy-D-xylulose 5-phosphate: step 2/6. In terms of biological role, catalyzes the formation of 4-diphosphocytidyl-2-C-methyl-D-erythritol from CTP and 2-C-methyl-D-erythritol 4-phosphate (MEP). This chain is 2-C-methyl-D-erythritol 4-phosphate cytidylyltransferase, found in Mycolicibacterium paratuberculosis (strain ATCC BAA-968 / K-10) (Mycobacterium paratuberculosis).